The following is a 951-amino-acid chain: Valine--tRNA ligase (951 aa).

A 'HIGH' region motif is present at residues 42–52 (PNVTGSLHMGH). A 'KMSKS' region motif is present at residues 554-558 (KMSKS). K557 serves as a coordination point for ATP. A coiled-coil region spans residues 880–944 (AGLINKEDEL…AEAKAKLIEQ (65 aa)).

It belongs to the class-I aminoacyl-tRNA synthetase family. ValS type 1 subfamily. Monomer.

It localises to the cytoplasm. It carries out the reaction tRNA(Val) + L-valine + ATP = L-valyl-tRNA(Val) + AMP + diphosphate. In terms of biological role, catalyzes the attachment of valine to tRNA(Val). As ValRS can inadvertently accommodate and process structurally similar amino acids such as threonine, to avoid such errors, it has a 'posttransfer' editing activity that hydrolyzes mischarged Thr-tRNA(Val) in a tRNA-dependent manner. In Salmonella paratyphi A (strain ATCC 9150 / SARB42), this protein is Valine--tRNA ligase.